We begin with the raw amino-acid sequence, 88 residues long: Small ribosomal subunit protein uS17 (88 aa).

Belongs to the universal ribosomal protein uS17 family. Part of the 30S ribosomal subunit.

Its function is as follows. One of the primary rRNA binding proteins, it binds specifically to the 5'-end of 16S ribosomal RNA. This is Small ribosomal subunit protein uS17 from Vesicomyosocius okutanii subsp. Calyptogena okutanii (strain HA).